A 368-amino-acid chain; its full sequence is Probable pectate lyase 4 (368 aa).

The first 25 residues, 1-25, serve as a signal peptide directing secretion; the sequence is MASLVVIVSLLLAAFASPLLETAHS. N-linked (GlcNAc...) asparagine glycosylation occurs at asparagine 27. Ca(2+)-binding residues include aspartate 167, aspartate 191, and aspartate 195. Arginine 247 is a catalytic residue.

The protein belongs to the polysaccharide lyase 1 family. It depends on Ca(2+) as a cofactor.

It carries out the reaction Eliminative cleavage of (1-&gt;4)-alpha-D-galacturonan to give oligosaccharides with 4-deoxy-alpha-D-galact-4-enuronosyl groups at their non-reducing ends.. The protein operates within glycan metabolism; pectin degradation; 2-dehydro-3-deoxy-D-gluconate from pectin: step 2/5. This Arabidopsis thaliana (Mouse-ear cress) protein is Probable pectate lyase 4.